The sequence spans 558 residues: uncharacterized protein (558 aa).

Residues 47-78 adopt a coiled-coil conformation; that stretch reads DFDDLNSIFKDFQKQKKNLKDNILKFYNKKKE. Disordered regions lie at residues 239 to 266 and 424 to 447; these read NNNN…SKIE and NNNN…NSGE. The segment covering 245-266 has biased composition (basic and acidic residues); that stretch reads TETESEIESKSESESESESKIE. Residues 424-444 are compositionally biased toward low complexity; that stretch reads NNNNNNNNNNNNNNNNNNNNN.

This is an uncharacterized protein from Dictyostelium discoideum (Social amoeba).